The following is a 118-amino-acid chain: Non-specific lipid-transfer protein 1 (118 aa).

Positions 1–20 (MARLAVAIAVVAAVVVVLAA) are cleaved as a signal peptide. 4 disulfide bridges follow: cysteine 29–cysteine 77, cysteine 39–cysteine 54, cysteine 55–cysteine 100, and cysteine 75–cysteine 114.

It belongs to the plant LTP family.

Its function is as follows. Plant non-specific lipid-transfer proteins transfer phospholipids as well as galactolipids across membranes. May play a role in wax or cutin deposition in the cell walls of expanding epidermal cells and certain secretory tissues. In Sorghum bicolor (Sorghum), this protein is Non-specific lipid-transfer protein 1 (LTP1).